The following is a 371-amino-acid chain: Sporulation-specific protein 2 (371 aa).

The protein resides in the spore wall. Essential for sporulation and seems to have a role at the time of, or after, initiation of nuclear division. Appears to have a role in outer spore wall formation. In Saccharomyces cerevisiae (strain ATCC 204508 / S288c) (Baker's yeast), this protein is Sporulation-specific protein 2 (SSP2).